We begin with the raw amino-acid sequence, 327 residues long: Zinc transport protein ZntB (327 aa).

The Cytoplasmic portion of the chain corresponds to 1 to 273 (MEGIKGSEVN…SRRTYTMSLM (273 aa)). Residues 274 to 294 (AMVFLPSTFLTGLFGVNLGGI) form a helical membrane-spanning segment. Residues 295–300 (PGGGYQ) lie on the Periplasmic side of the membrane. The chain crosses the membrane as a helical span at residues 301–321 (FGFSAFCIMLVVLIGGVAWWL). The Cytoplasmic segment spans residues 322-327 (HRSKWL).

The protein belongs to the CorA metal ion transporter (MIT) (TC 1.A.35) family.

It is found in the cell inner membrane. It carries out the reaction Zn(2+)(out) + H(+)(out) = Zn(2+)(in) + H(+)(in). Functionally, zinc transporter. Acts as a Zn(2+):proton symporter, which likely mediates zinc ion uptake. The protein is Zinc transport protein ZntB of Enterobacter sp. (strain 638).